Consider the following 214-residue polypeptide: Ribonuclease HII (214 aa).

Residues 26-214 (EIVCGVDEAG…PVRAALDLIR (189 aa)) enclose the RNase H type-2 domain. 3 residues coordinate a divalent metal cation: Asp-32, Glu-33, and Asp-124.

The protein belongs to the RNase HII family. Mn(2+) is required as a cofactor. Mg(2+) serves as cofactor.

The protein localises to the cytoplasm. It catalyses the reaction Endonucleolytic cleavage to 5'-phosphomonoester.. Endonuclease that specifically degrades the RNA of RNA-DNA hybrids. This Burkholderia lata (strain ATCC 17760 / DSM 23089 / LMG 22485 / NCIMB 9086 / R18194 / 383) protein is Ribonuclease HII.